A 481-amino-acid polypeptide reads, in one-letter code: Phosphoglucosamine mutase (481 aa).

Serine 128 (phosphoserine intermediate) is an active-site residue. Residues serine 128, aspartate 269, aspartate 271, and aspartate 273 each contribute to the Mg(2+) site. Serine 128 carries the phosphoserine modification.

It belongs to the phosphohexose mutase family. It depends on Mg(2+) as a cofactor. In terms of processing, activated by phosphorylation.

It catalyses the reaction alpha-D-glucosamine 1-phosphate = D-glucosamine 6-phosphate. Its function is as follows. Catalyzes the conversion of glucosamine-6-phosphate to glucosamine-1-phosphate. This Synechocystis sp. (strain ATCC 27184 / PCC 6803 / Kazusa) protein is Phosphoglucosamine mutase.